The primary structure comprises 212 residues: Ras-related protein Rab-15 (212 aa).

The GTP site is built by Ser-17, Gly-18, Val-19, Gly-20, Lys-21, Thr-22, Cys-23, Ser-35, Ser-39, and Thr-40. Thr-22 lines the Mg(2+) pocket. 2 consecutive short sequence motifs (switch) follow at residues 31–45 (NEFHSSHISTIGVDF) and 63–80 (DTAGQERYQTITKQYYRR). The Mg(2+) site is built by Thr-40 and Asp-63. Positions 66, 121, 122, 124, 151, and 152 each coordinate GTP. The tract at residues 193 to 212 (LEEEEGKPEGPANSSKTCWC) is disordered. 2 S-geranylgeranyl cysteine lipidation sites follow: Cys-210 and Cys-212. A Cysteine methyl ester modification is found at Cys-212.

It belongs to the small GTPase superfamily. Rab family. As to quaternary structure, the GTP bound form of RAB15 interacts with REP15. Interacts (GTP-bound form) with MICAL1, MICAL3, MICALCL, EHBP1 and EHBP1L1. The cofactor is Mg(2+).

The protein localises to the cell membrane. The catalysed reaction is GTP + H2O = GDP + phosphate + H(+). Regulated by guanine nucleotide exchange factors (GEFs) which promote the exchange of bound GDP for free GTP. Regulated by GTPase activating proteins (GAPs) which increase the GTP hydrolysis activity. Inhibited by GDP dissociation inhibitors (GDIs). In terms of biological role, the small GTPases Rab are key regulators of intracellular membrane trafficking, from the formation of transport vesicles to their fusion with membranes. Rabs cycle between an inactive GDP-bound form and an active GTP-bound form that is able to recruit to membranes different sets of downstream effectors directly responsible for vesicle formation, movement, tethering and fusion. RAB15 may act in concert with RAB3A in regulating aspects of synaptic vesicle membrane flow within the nerve terminal. This is Ras-related protein Rab-15 from Homo sapiens (Human).